A 158-amino-acid chain; its full sequence is Cyclic pyranopterin monophosphate synthase (158 aa).

Residues 74 to 76 (MCH) and 112 to 113 (ME) each bind substrate. D127 is an active-site residue.

This sequence belongs to the MoaC family. In terms of assembly, homohexamer; trimer of dimers.

The catalysed reaction is (8S)-3',8-cyclo-7,8-dihydroguanosine 5'-triphosphate = cyclic pyranopterin phosphate + diphosphate. It participates in cofactor biosynthesis; molybdopterin biosynthesis. Catalyzes the conversion of (8S)-3',8-cyclo-7,8-dihydroguanosine 5'-triphosphate to cyclic pyranopterin monophosphate (cPMP). The sequence is that of Cyclic pyranopterin monophosphate synthase from Helicobacter pylori (strain ATCC 700392 / 26695) (Campylobacter pylori).